The following is a 151-amino-acid chain: Ribosome maturation factor RimP (151 aa).

It belongs to the RimP family.

It localises to the cytoplasm. Required for maturation of 30S ribosomal subunits. In Persephonella marina (strain DSM 14350 / EX-H1), this protein is Ribosome maturation factor RimP.